Reading from the N-terminus, the 1415-residue chain is MKDLVKFLKAQSKTSEDFDVIKIGLASPDMIRSWSFGEVKKPETINYRTFKPERDGLFCARIFGPVKDYECLCGKYKRLKHRGVICEKCGVEVTQTKVRRERMGHIELASPVAHIWFLKSLPSRIGLLLDMPLRDIERVLYFEMYIVTEPGMTDLERGQLLTEEQYLDAEDRWQDEFEAKMGAEAIQDLLKGMDLEAECEKLREELQETNSETKRKKITKRLKLLEAFVQSGNKPEWMVMTVLPVLPPDLRPLVPLDGGRFATSDLNDLYRRVINRNNRLKRLLDLIAPDIIVRNEKRMLQESVDALLDNGRRGRAITGSNRRPLKSLADMIKGKQGRFRQNLLGKRVDYSGRSVITVGPYLHLHQCGLPKKMALELFRPFIYAKLESRGYATTIKAAKKMVEREDAIVWDILAEVIREHPILLNRAPTLHRLGIQAFEPILIEGKAIQLHPLVCAAFNADFDGDQMAVHVPLTLEAQLEARALMMSTNNVLSPANGDPIIVPSQDVVLGLYYMTREKVNGKGEGMLLQDPREAEKAYRTGEAELHSRVKVRITEYVKNEAGEFDAKTTLTDTTIGRAILWMIAPKGMPYSLFNQTLGKKAISKLINEAYRRLGLKEAVMFADQIMYTGFAYAARSGSSVGIDDMEIPAKKYEIISAAEEEVAEIQEQFQSGLVTAGERYNKVIDIWAAANERVAKAMMENLSQEEVINREGNPEKQASFNSIFMMADSGARGSAAQIRQLAGMRGLMARPDGSIIETPITANFREGLNVLQYFISTHGARKGLADTALKTANSGYLTRRLVDVAQDLVIVEDDCGTHEGLVMTPLIEGGDEKVPLRELVLGRVAAEDILKPGTEEVLIPRNTLLDEKLCDVLDANSVDSVKVRSVVTCDTDFGVCAKCYGRDLARGHLINQGEAVGVIAAQSIGEPGTQLTMRTFHIGGAASAAAKESSVQVKNTGTVHLMNAKFVTNDESKLVLTSRNTELTITDAFGRTKEHYKVPYGAVLSKGDGQEVTAGETIANWDPHTMPVVSEVSGFVKFVDIIDGLTVTRQTDELTGLSSIVVQDVGERATAGKDLRPTIKLVDANGNDIFLPETDVLAQYFLPGKAIVSLDDGTAVKVGEPLARIPQESVGTKDITGGLPRVADLFEARKPKEPAILAEISGIVSFGKETKGKRRLLITPAEGETYEEMIPKWRQLNVFEGEMVQRGDVISDGAETPHDILRLRGVRAVTEYIVNEVQDVYRLQGVKINDKHIEVIVRQMLRKAVITKAYDSEFLEGEQVEVARVKIVNRQREAEGKPPVEFERELLGITKASLATESFISAASFQETTRVLTEAAVAGKRDELRGLKENVIVGRLIPAGTGFAYHQNRHKHRLVDDVVAKLSEEDEAAIADEFVITADDATQNLATLLNSEIED.

Positions 71, 73, 86, and 89 each coordinate Zn(2+). Aspartate 461, aspartate 463, and aspartate 465 together coordinate Mg(2+). Residues cysteine 815, cysteine 889, cysteine 896, and cysteine 899 each coordinate Zn(2+).

Belongs to the RNA polymerase beta' chain family. In terms of assembly, the RNAP catalytic core consists of 2 alpha, 1 beta, 1 beta' and 1 omega subunit. When a sigma factor is associated with the core the holoenzyme is formed, which can initiate transcription. Requires Mg(2+) as cofactor. The cofactor is Zn(2+).

It carries out the reaction RNA(n) + a ribonucleoside 5'-triphosphate = RNA(n+1) + diphosphate. Functionally, DNA-dependent RNA polymerase catalyzes the transcription of DNA into RNA using the four ribonucleoside triphosphates as substrates. This chain is DNA-directed RNA polymerase subunit beta', found in Haemophilus influenzae (strain ATCC 51907 / DSM 11121 / KW20 / Rd).